A 738-amino-acid chain; its full sequence is Eukaryotic translation initiation factor 3 subunit B (738 aa).

Polar residues predominate over residues 1–10 (MAPSFENLSE). Residues 1-20 (MAPSFENLSEQDLHEEEEEE) form a disordered region. The 87-residue stretch at 40 to 126 (TFVVIDGLPV…HTLLVNKLMD (87 aa)) folds into the RRM domain. WD repeat units follow at residues 193–230 (AHWT…KQKQ), 232–289 (PHPF…RSFV), 301–342 (QPKK…LLGK), 454–494 (SLKD…SFFA), 511–554 (IEKK…EKND), and 569–607 (VDHY…HTFS). The interval 693–720 (EAYGLPEEADQPKAAKDAPTNTEDKGET) is disordered. Over residues 702 to 720 (DQPKAAKDAPTNTEDKGET) the composition is skewed to basic and acidic residues.

It belongs to the eIF-3 subunit B family. Component of the eukaryotic translation initiation factor 3 (eIF-3) complex.

The protein resides in the cytoplasm. Its function is as follows. RNA-binding component of the eukaryotic translation initiation factor 3 (eIF-3) complex, which is involved in protein synthesis of a specialized repertoire of mRNAs and, together with other initiation factors, stimulates binding of mRNA and methionyl-tRNAi to the 40S ribosome. The eIF-3 complex specifically targets and initiates translation of a subset of mRNAs involved in cell proliferation. The sequence is that of Eukaryotic translation initiation factor 3 subunit B (prt1) from Emericella nidulans (strain FGSC A4 / ATCC 38163 / CBS 112.46 / NRRL 194 / M139) (Aspergillus nidulans).